Consider the following 495-residue polypeptide: MELLNSLLLLFLIYLIHSFYIKNKRIHKNEAKGPIGFPLIGNMIQIGKTKPHIELMKLEKIYNQRILKIWLGDYYSVFLSDIDLIKDIFINKFENFSSRPKSPLTRLGTNDFRGINGSSGETWFKNKNIIVNAMKRANTKTIYTLLDNQVNDLIKEISKFESQNKSFNPKYYFRKFVLSTMFKYIFNEDVPYDENLENGKLSELTMEMENIFKTLKVGKLANSIEILETPYYYYLQKTDKVFKNIKKLIIEKYKNHNLSINPEKPRDLLDILINEYGTTDDDVLNITQVTLDMFMAGTDTTANTLEWIIIKLCNSPIHQEIAYNELKKVVSSKVIIDDSIKREITLSDRPNTPYIQAIIKETMRMHPVVVFGLPRYCENDIFIGDENYFIPKGCKVFINFHSIGYNEKYFKDPYKFEPNRFLENSNNSMDSFFPFGLGNRVCLGRQLANDQLYLVIANLILKYKLKTIDENKINEDGIFGLTVSPNKYKINLESR.

The helical transmembrane segment at 3-21 (LLNSLLLLFLIYLIHSFYI) threads the bilayer. C442 contacts heme.

The protein belongs to the cytochrome P450 family. Heme serves as cofactor.

The protein localises to the membrane. The sequence is that of Probable cytochrome P450 508C1 (cyp508C1) from Dictyostelium discoideum (Social amoeba).